Here is a 553-residue protein sequence, read N- to C-terminus: 5'-nucleotidase domain-containing protein 2 (553 aa).

Residues 26–51 form a disordered region; sequence SSSPSCPGCGPPGPGAHCPSTPRSAP. Asp106 serves as the catalytic Nucleophile. Asp106, Asp108, and Asp391 together coordinate Mg(2+). Asp108 (proton donor) is an active-site residue.

This sequence belongs to the 5'(3')-deoxyribonucleotidase family. In terms of assembly, interacts with tyrosine 3-monooxygenase TH; the interaction results in reduced phosphorylation and decreased catalytic activity of TH. In terms of tissue distribution, expressed in eye iridocorneal angle.

The protein localises to the cytoplasm. Promotes dephosphorylation of tyrosine 3-monooxygenase TH which decreases TH catalytic activity and leads to reduced synthesis of catecholamines including dopamine, noradrenaline and adrenaline. The exact mechanism of activity is unknown but may act as a phosphatase or promote the activity of phosphatases or may inhibit phosphorylation by acting as a barrier to interfere with protein kinase access. The sequence is that of 5'-nucleotidase domain-containing protein 2 (Nt5dc2) from Rattus norvegicus (Rat).